Here is a 259-residue protein sequence, read N- to C-terminus: Pimeloyl-[acyl-carrier protein] methyl ester esterase (259 aa).

The 228-residue stretch at 15-242 (HLVLLHGWGL…AAHAPFISHP (228 aa)) folds into the AB hydrolase-1 domain. Substrate contacts are provided by residues W22, 82–83 (SL), and 143–147 (FLALQ). The active-site Nucleophile is the S82. Residues D207 and H235 contribute to the active site. Residue H235 participates in substrate binding.

Belongs to the AB hydrolase superfamily. Carboxylesterase BioH family. As to quaternary structure, monomer.

It localises to the cytoplasm. The catalysed reaction is 6-carboxyhexanoyl-[ACP] methyl ester + H2O = 6-carboxyhexanoyl-[ACP] + methanol + H(+). It functions in the pathway cofactor biosynthesis; biotin biosynthesis. The physiological role of BioH is to remove the methyl group introduced by BioC when the pimeloyl moiety is complete. It allows to synthesize pimeloyl-ACP via the fatty acid synthetic pathway through the hydrolysis of the ester bonds of pimeloyl-ACP esters. This is Pimeloyl-[acyl-carrier protein] methyl ester esterase from Cronobacter sakazakii (strain ATCC BAA-894) (Enterobacter sakazakii).